The following is a 429-amino-acid chain: D-amino acid dehydrogenase 1 (429 aa).

An FAD-binding site is contributed by 3-17 (VLVLGSGVIGVTSAY).

It belongs to the DadA oxidoreductase family. FAD is required as a cofactor.

The enzyme catalyses a D-alpha-amino acid + A + H2O = a 2-oxocarboxylate + AH2 + NH4(+). Functionally, oxidative deamination of D-amino acids. This chain is D-amino acid dehydrogenase 1 (dadA1), found in Ralstonia nicotianae (strain ATCC BAA-1114 / GMI1000) (Ralstonia solanacearum).